Consider the following 296-residue polypeptide: Ribonuclease MRP protein subunit POP4 (296 aa).

Disordered regions lie at residues 29 to 74 and 148 to 173; these read LLQQ…VDPK and SASGSKKASQKDSKRSKSRMSMKRLK. Residues 36–56 show a composition bias toward basic and acidic residues; it reads KNEKDKKGTSDVDVSMKESHQ. Residues 57–66 show a composition bias toward polar residues; that stretch reads ADSLPTPSKT. Positions 160-167 match the Nuclear localization signal motif; that stretch reads SKRSKSRM. Over residues 163–173 the composition is skewed to basic residues; sequence SKSRMSMKRLK.

It belongs to the eukaryotic/archaeal RNase P protein component 1 family. Component of nuclear RNase MRP complexes. Several subunits of RNase P are also part of the RNase MRP complex. RNase MRP consists of a catalytic RNA moiety and several protein subunits.

It localises to the nucleus. In terms of biological role, component of the MRP ribonuclease complex, which cleaves pre-rRNA sequences. Required for rRNA maturation, including 5.8S rRNA processing. Seems not involved in tRNA maturation. The chain is Ribonuclease MRP protein subunit POP4 from Arabidopsis thaliana (Mouse-ear cress).